Here is a 104-residue protein sequence, read N- to C-terminus: Complex III assembly factor LYRM7 (104 aa).

A Phosphoserine modification is found at Ser-60.

The protein belongs to the complex I LYR family. In terms of assembly, interacts with UQCRFS1.

It is found in the mitochondrion matrix. In terms of biological role, assembly factor required for Rieske Fe-S protein UQCRFS1 incorporation into the cytochrome b-c1 (CIII) complex. Functions as a chaperone, binding to this subunit within the mitochondrial matrix and stabilizing it prior to its translocation and insertion into the late CIII dimeric intermediate within the mitochondrial inner membrane. The chain is Complex III assembly factor LYRM7 (Lyrm7) from Mus musculus (Mouse).